Reading from the N-terminus, the 323-residue chain is Transposase for insertion sequence element IS6120 (323 aa).

The interval 300-323 is disordered; sequence ERPTDITPPTSPSDGGQHAGTEVA. Positions 304 to 313 are enriched in low complexity; sequence DITPPTSPSD.

The protein belongs to the transposase mutator family.

Its function is as follows. Required for the transposition of the insertion element. This chain is Transposase for insertion sequence element IS6120, found in Mycolicibacterium smegmatis (Mycobacterium smegmatis).